A 379-amino-acid polypeptide reads, in one-letter code: MAKKVKKTDDISKKFGEDRRKALDDALKNIEKDFGKGAVMRLGERAEQKVQVMSSGSLALDIALGAGGYPKGRIIEIYGPESSGKTTVALHAVAQAQKEGGIAAFIDAEHALDPAYAAALGVNIDELLLSQPDSGEQGLEIAGKLIDSGAVDLVVIDSVAALVPRAEIDGDIGDSHVGLQARMMSQAMRKLSASINKTKTIAIFINQLREKVGVMFGNPETTPGGRALKFYASVRLDVRGNTQIKGTGDQKDSSIGKETKIKVVKNKVAPPFKVAEVEIMYGEGISRTGELIKIASDLDVIQKAGAWFSYNGEKIGQGSENAKKFLADHPEIFDEIDHKVRVKVGLLEDEVLDNNQETVELPETDEFILDLDDAIEIED.

Gly-79–Thr-86 contributes to the ATP binding site.

This sequence belongs to the RecA family.

The protein resides in the cytoplasm. Can catalyze the hydrolysis of ATP in the presence of single-stranded DNA, the ATP-dependent uptake of single-stranded DNA by duplex DNA, and the ATP-dependent hybridization of homologous single-stranded DNAs. It interacts with LexA causing its activation and leading to its autocatalytic cleavage. In Streptococcus uberis (strain ATCC BAA-854 / 0140J), this protein is Protein RecA.